Reading from the N-terminus, the 958-residue chain is Glycine dehydrogenase (decarboxylating) (958 aa).

Position 705 is an N6-(pyridoxal phosphate)lysine (lysine 705).

Belongs to the GcvP family. As to quaternary structure, the glycine cleavage system is composed of four proteins: P, T, L and H. It depends on pyridoxal 5'-phosphate as a cofactor.

It carries out the reaction N(6)-[(R)-lipoyl]-L-lysyl-[glycine-cleavage complex H protein] + glycine + H(+) = N(6)-[(R)-S(8)-aminomethyldihydrolipoyl]-L-lysyl-[glycine-cleavage complex H protein] + CO2. Functionally, the glycine cleavage system catalyzes the degradation of glycine. The P protein binds the alpha-amino group of glycine through its pyridoxal phosphate cofactor; CO(2) is released and the remaining methylamine moiety is then transferred to the lipoamide cofactor of the H protein. The chain is Glycine dehydrogenase (decarboxylating) from Bdellovibrio bacteriovorus (strain ATCC 15356 / DSM 50701 / NCIMB 9529 / HD100).